We begin with the raw amino-acid sequence, 278 residues long: uncharacterized protein (278 aa).

Residues 1-34 lie on the Cytoplasmic side of the membrane; the sequence is MAKTIKVIRKKDPKKKNLSDPLAKQKLVWKIGHV. Residues 35–55 form a helical membrane-spanning segment; that stretch reads LTLVFGLLFSITYFYHVLIFF. Residues 56–129 lie on the Extracellular side of the membrane; sequence KYRSWKWLFL…DLLSSENFHT (74 aa). The helical transmembrane segment at 130–150 threads the bilayer; sequence LLIACLWFFGGGKSFYKILPY. At 151–180 the chain is on the cytoplasmic side; the sequence is MILSYLHLTKMNYELNANKEEKIPLTPKDR. The helical transmembrane segment at 181 to 201 threads the bilayer; sequence KMLHLLAYSELLVILALTLDT. The Extracellular segment spans residues 202–205; sequence ILFK. A helical transmembrane segment spans residues 206–222; the sequence is TGTSGFMLVIYVGIYWL. At 223-278 the chain is on the cytoplasmic side; sequence RLNFSPYAQVAVLELLVKFEKYVPKKYRDKWQVIKNFIYMKMKEHEKRTEEVARYA.

Its subcellular location is the cell membrane. This is an uncharacterized protein from Saccharomyces cerevisiae (strain ATCC 204508 / S288c) (Baker's yeast).